The following is a 38-amino-acid chain: Augerpeptide hhe53 (38 aa).

Post-translationally, contains 2 disulfide bonds. As to expression, expressed by the venom duct.

The protein localises to the secreted. The chain is Augerpeptide hhe53 from Hastula hectica (Sea snail).